We begin with the raw amino-acid sequence, 191 residues long: Phosphopantetheine adenylyltransferase (191 aa).

A substrate-binding site is contributed by Ser-8. Residues Ser-8–Phe-9 and His-16 contribute to the ATP site. Lys-40, Thr-72, and Arg-86 together coordinate substrate. Residues Gly-87–Arg-89, Glu-97, and Tyr-122–Ser-128 contribute to the ATP site.

It belongs to the bacterial CoaD family. As to quaternary structure, homohexamer. Mg(2+) serves as cofactor.

It is found in the cytoplasm. The enzyme catalyses (R)-4'-phosphopantetheine + ATP + H(+) = 3'-dephospho-CoA + diphosphate. It functions in the pathway cofactor biosynthesis; coenzyme A biosynthesis; CoA from (R)-pantothenate: step 4/5. Functionally, reversibly transfers an adenylyl group from ATP to 4'-phosphopantetheine, yielding dephospho-CoA (dPCoA) and pyrophosphate. The chain is Phosphopantetheine adenylyltransferase from Nostoc sp. (strain PCC 7120 / SAG 25.82 / UTEX 2576).